Here is a 900-residue protein sequence, read N- to C-terminus: MTTNYKTTLLMPKTDFPMKGNLGKNEINIQKHWQKLDLYQKKLQQNQDNNPFILHDGPPYANGNIHMGHALNKILKDFIVRFRSMQGFYTPLIPGWDTHGLPIEAAVLKKTSKNAFTRKPLLDKCQEFALENVNNQKHQFQRLGILGDWQNPYLTLDKTFVSDQVRIFGQMVDKGLIFKALKPIHWSPTLESALAEAELEYHNHQSPSVYVAFSMKKLDIFDNVALVIWTTTPWTLPANVAIAVHPEKEYQLIEVLQKRYLVGTKNIPFLQKVFAWNKENIKVVATFEGKTLEHLTYQNHLVSKFGKIILSQHVLDGEGTGLVHIAPGHGLDDFLVGQKYNLDVVCSIDKKGMMTDVSKYQGLFYTKANEAIISDLEKDHSLLKADVILHSYPHDWRTKKPVISLALPQWFVSIKKIKSLLLEETQKVKWIPRWGELKMTNMITNREDWNISRQRTWGVPIPIFYTETHQPILDLKLINHVADLFEQHGMDIWYEWDVKKLLPENYINPQSPNNLFTKELDIMDVWFDSGTSYSVFKKRNQVLQSDVYLEGSDQYRGWFNSSLITSVATQNQAPYKTVITHGFVFDGEGKKMSKSLGNVIDPLTVAEQKGADIIRLWVANTNYNLDVRINPSILKQVEDLYRKIRNTFRFMLGNLDNFKKDTNYIAFEQRTFIHQAMMLDFEEVLKNVLHSYDTYNFEGVLRHLFPFITNKISAFYLDFAKDILYIEKEDHKERKMIQSTIYDLLLSLLQVLTPIIPHTTSEVYGFFPFAVEKDIYLEKMPQLKARPTSHLLLEYHKFLTLRKNVLQYLEKARQSGLINSSLQAHITLSLTQEEMHALDVLQIKDQLHQLFIVSKVTLQLKDTFDVKVAKASGYACQRCWNVVITKPLTPLCTRCQNILK.

The 'HIGH' region motif lies at 59–69; sequence PYANGNIHMGH. Position 550 (Glu550) interacts with L-isoleucyl-5'-AMP. The short motif at 591-595 is the 'KMSKS' region element; that stretch reads KMSKS. Lys594 is a binding site for ATP. Cys876, Cys879, Cys892, and Cys895 together coordinate Zn(2+).

Belongs to the class-I aminoacyl-tRNA synthetase family. IleS type 1 subfamily. Monomer. Requires Zn(2+) as cofactor.

The protein localises to the cytoplasm. The enzyme catalyses tRNA(Ile) + L-isoleucine + ATP = L-isoleucyl-tRNA(Ile) + AMP + diphosphate. Functionally, catalyzes the attachment of isoleucine to tRNA(Ile). As IleRS can inadvertently accommodate and process structurally similar amino acids such as valine, to avoid such errors it has two additional distinct tRNA(Ile)-dependent editing activities. One activity is designated as 'pretransfer' editing and involves the hydrolysis of activated Val-AMP. The other activity is designated 'posttransfer' editing and involves deacylation of mischarged Val-tRNA(Ile). In Onion yellows phytoplasma (strain OY-M), this protein is Isoleucine--tRNA ligase.